Here is a 243-residue protein sequence, read N- to C-terminus: 2-C-methyl-D-erythritol 4-phosphate cytidylyltransferase (243 aa).

It belongs to the IspD/TarI cytidylyltransferase family. IspD subfamily.

It catalyses the reaction 2-C-methyl-D-erythritol 4-phosphate + CTP + H(+) = 4-CDP-2-C-methyl-D-erythritol + diphosphate. Its pathway is isoprenoid biosynthesis; isopentenyl diphosphate biosynthesis via DXP pathway; isopentenyl diphosphate from 1-deoxy-D-xylulose 5-phosphate: step 2/6. Catalyzes the formation of 4-diphosphocytidyl-2-C-methyl-D-erythritol from CTP and 2-C-methyl-D-erythritol 4-phosphate (MEP). The polypeptide is 2-C-methyl-D-erythritol 4-phosphate cytidylyltransferase (Colwellia psychrerythraea (strain 34H / ATCC BAA-681) (Vibrio psychroerythus)).